Consider the following 75-residue polypeptide: Tautomerase PptA (75 aa).

Pro-2 (proton acceptor; via imino nitrogen) is an active-site residue.

It belongs to the 4-oxalocrotonate tautomerase family. PptA subfamily. As to quaternary structure, homodimer.

Its subcellular location is the cytoplasm. The polypeptide is Tautomerase PptA (Escherichia coli O139:H28 (strain E24377A / ETEC)).